Here is a 425-residue protein sequence, read N- to C-terminus: MAAASSFTAAAKFLAPVSARSAGDYKPPLPLPASASLRPGRKPAPRLRTALAVSSDVLPGNKAAPAAAAHSAVTREEALELYEDMVLGRIFEDMCAQMYYRGKMFGFVHLYNGQEAVSTGFIKLLNQADCVVSTYRDHVHALSKGVPARSVMAELFGKATGCCRGQGGSMHMFSEPHNLLGGFAFIGEGIPVATGAAFAAKYRHEVLKQSSPDGLDVTLAFFGDGTCNNGQFFECLNMAQLWKLPIVFVVENNLWAIGMSHLRATSDPEIYKKGPAFGMPGVHVDGMDVLKVREVAKEAIERARRGEGPTLVECETYRFRGHSLADPDELRRPDEKSHYAARDPITALKKYIIEQNLATESELKSIEKKIDDVVEEAVEFADASPLPPRSQLLENVFSDPKGFGIGPDGKYRCEDPLFTQGTAQV.

Residues 1–66 constitute a chloroplast transit peptide; the sequence is MAAASSFTAA…VLPGNKAAPA (66 aa). His109, Tyr135, Arg136, Ala184, Ile186, Asp224, Gly225, and Asn253 together coordinate pyruvate. Thiamine diphosphate-binding residues include Tyr135, Arg136, Ala184, Ile186, Asp224, Gly225, Asn253, and His322. Asp224 provides a ligand contact to Mg(2+). Residue Asn253 participates in Mg(2+) binding.

Tetramer of 2 alpha and 2 beta subunits. Requires thiamine diphosphate as cofactor. Mg(2+) is required as a cofactor.

The protein resides in the plastid. The protein localises to the chloroplast. It carries out the reaction N(6)-[(R)-lipoyl]-L-lysyl-[protein] + pyruvate + H(+) = N(6)-[(R)-S(8)-acetyldihydrolipoyl]-L-lysyl-[protein] + CO2. In terms of biological role, the pyruvate dehydrogenase complex catalyzes the overall conversion of pyruvate to acetyl-CoA and CO(2). It contains multiple copies of three enzymatic components: pyruvate dehydrogenase (E1), dihydrolipoamide acetyltransferase (E2) and lipoamide dehydrogenase (E3). In Oryza sativa subsp. japonica (Rice), this protein is Pyruvate dehydrogenase E1 component subunit alpha-3, chloroplastic.